Reading from the N-terminus, the 89-residue chain is Small ribosomal subunit protein uS15 (89 aa).

The protein belongs to the universal ribosomal protein uS15 family. Part of the 30S ribosomal subunit. Forms a bridge to the 50S subunit in the 70S ribosome, contacting the 23S rRNA.

One of the primary rRNA binding proteins, it binds directly to 16S rRNA where it helps nucleate assembly of the platform of the 30S subunit by binding and bridging several RNA helices of the 16S rRNA. Its function is as follows. Forms an intersubunit bridge (bridge B4) with the 23S rRNA of the 50S subunit in the ribosome. The polypeptide is Small ribosomal subunit protein uS15 (Corynebacterium kroppenstedtii (strain DSM 44385 / JCM 11950 / CIP 105744 / CCUG 35717)).